A 1183-amino-acid polypeptide reads, in one-letter code: SRC kinase signaling inhibitor 1 (1183 aa).

The disordered stretch occupies residues 1 to 44; the sequence is MGNAPSQDPERSSPPMLSADDAEYPREYRTLGGGGGGGSGGRRF. Phosphoserine is present on residues Ser13 and Ser18. Positions 31-41 are enriched in gly residues; the sequence is LGGGGGGGSGG. A Phosphoserine modification is found at Ser45. Thr52 bears the Phosphothreonine mark. Ser53, Ser64, Ser143, Ser165, Ser169, Ser179, and Ser225 each carry phosphoserine. The residue at position 241 (Tyr241) is a Phosphotyrosine. Residues 284-379 are disordered; sequence ASRESSPTRR…ERRDVKPDED (96 aa). Positions 286–296 are enriched in polar residues; the sequence is RESSPTRRLNN. Low complexity predominate over residues 297-306; the sequence is LSPAPHLASG. Phosphoserine is present on residues Ser298, Ser307, and Ser324. A compositionally biased stretch (low complexity) spans 313-331; the sequence is PSGLPSGLQSGSPSRSRLS. Omega-N-methylarginine occurs at positions 329 and 336. 3 positions are modified to phosphoserine: Ser343, Ser362, and Ser364. A compositionally biased stretch (basic and acidic residues) spans 369 to 379; that stretch reads LERRDVKPDED. At Tyr396 the chain carries Phosphotyrosine. The disordered stretch occupies residues 466–643; it reads YGFRLPPSSP…ASSTPAGQPT (178 aa). Residues 485–497 show a composition bias toward pro residues; it reads PGGPPPPHSPYSG. Ser493, Ser496, and Ser500 each carry phosphoserine. Arg501 bears the Omega-N-methylarginine mark. 5 positions are modified to phosphoserine: Ser503, Ser513, Ser515, Ser517, and Ser522. Positions 524-541 are enriched in low complexity; sequence GGKTRSAGSASTAGAPPS. Over residues 562–574 the composition is skewed to basic and acidic residues; the sequence is KDTETRERMEAME. 2 positions are modified to phosphoserine: Ser598 and Ser621. Phosphothreonine occurs at positions 624 and 637. Residues 634 to 643 show a composition bias toward low complexity; sequence ASSTPAGQPT. The tract at residues 647 to 697 is interaction with SNAP25; the sequence is RLQMQLHLRGLQNSASDLRGQLQQLRKLQLQNQESVRALLKRTEAELSMRV. Coiled-coil stretches lie at residues 654 to 674 and 726 to 746; these read LRGLQNSASDLRGQLQQLRKL and EELITQQLNDLEKSVEKIQRD. Phosphoserine is present on residues Ser844, Ser857, and Ser866. Disordered stretches follow at residues 861–907 and 949–1032; these read EMPP…KAVS and DCAS…VTSK. Thr884 is modified (phosphothreonine). Residue Ser987 is modified to Phosphoserine. Residues 1002–1011 are compositionally biased toward pro residues; that stretch reads KSPPPPPPRR. 2 positions are modified to phosphoserine: Ser1043 and Ser1060. Disordered stretches follow at residues 1058–1081 and 1105–1183; these read AVSEVARPASTPPIMASAIKDEDD and GASR…SISF. The span at 1135–1183 shows a compositional bias: polar residues; the sequence is QAQQQATKPSKEMSGSNETSSPVSEKPSASRTSIPVLTSFGARNSSISF.

This sequence belongs to the SRCIN1 family. As to quaternary structure, interacts with the N-terminal coiled-coil region of SNAP25. Interacts with BCAR1/p130Cas and SRC through its C-terminal domain. Interacts with CSK, CTTN, SORBS3/vinexin, SYP and MAPRE3/EB3. Tyrosine-phosphorylated in response to EGF and to cell adhesion to integrin ligands. In terms of tissue distribution, expressed in some primary breast carcinomas where its presence is significantly associated with increased tumor size. Not detected in normal breast tissue.

The protein localises to the cytoplasm. It localises to the cytoskeleton. The protein resides in the cell projection. Its subcellular location is the axon. It is found in the dendrite. The protein localises to the presynapse. It localises to the postsynapse. The protein resides in the postsynaptic density. In terms of biological role, acts as a negative regulator of SRC by activating CSK which inhibits SRC activity and downstream signaling, leading to impaired cell spreading and migration. Regulates dendritic spine morphology. Involved in calcium-dependent exocytosis. May play a role in neurotransmitter release or synapse maintenance. In Homo sapiens (Human), this protein is SRC kinase signaling inhibitor 1.